A 500-amino-acid polypeptide reads, in one-letter code: Na(+)/H(+) antiporter NhaB (500 aa).

Helical transmembrane passes span 23 to 43 (VVIC…GPVA), 53 to 73 (IFTL…LLLI), 96 to 116 (VILL…LLLF), 129 to 149 (AILA…LDAL), 150 to 170 (TVTA…HRVA), 205 to 225 (LLMH…VGEP), 238 to 258 (FVDF…AGLV), 311 to 331 (ILII…LMVI), 350 to 370 (FQDA…VAVI), 450 to 470 (ATPN…APLI), and 477 to 497 (MVWM…WAVT).

It belongs to the NhaB Na(+)/H(+) (TC 2.A.34) antiporter family.

The protein localises to the cell inner membrane. The catalysed reaction is 2 Na(+)(in) + 3 H(+)(out) = 2 Na(+)(out) + 3 H(+)(in). In terms of biological role, na(+)/H(+) antiporter that extrudes sodium in exchange for external protons. The chain is Na(+)/H(+) antiporter NhaB from Pseudomonas putida (strain ATCC 47054 / DSM 6125 / CFBP 8728 / NCIMB 11950 / KT2440).